Here is a 475-residue protein sequence, read N- to C-terminus: Tubulin epsilon chain (475 aa).

148-154 (GGGTGSG) serves as a coordination point for GTP.

Belongs to the tubulin family. Found in a complex with TEDC1, TEDC2, TUBE1 and TUBD1.

Its subcellular location is the cytoplasm. The protein resides in the cytoskeleton. It is found in the microtubule organizing center. It localises to the centrosome. The polypeptide is Tubulin epsilon chain (TUBE1) (Homo sapiens (Human)).